Consider the following 539-residue polypeptide: Cell division control protein 6 homolog (539 aa).

The tract at residues 1 to 40 (MPAIAGPSSSPQKHVVGSRSESIGGVRSAEVNTSRKRKLI) is disordered. Positions 35–38 (RKRK) match the Nuclear localization signal motif.

Belongs to the CDC6/cdc18 family. As to expression, highly expressed in roots, flower buds and etiolated seedlings. Expressed in leaves and stems. Highly expressed in proliferating cells such as root meristems, leaf primordia and young growing leaves, as well as cells undergoing endoreduplication cycles.

It localises to the nucleus. In terms of biological role, may be involved in the initiation of DNA replication. May play a role in endoreduplication. Could act as one of the factors that contributes to maintain endoreduplication competence. This chain is Cell division control protein 6 homolog, found in Arabidopsis thaliana (Mouse-ear cress).